Here is a 170-residue protein sequence, read N- to C-terminus: Probable deoxyuridine 5'-triphosphate nucleotidohydrolase (170 aa).

Belongs to the dCTP deaminase family. Archaeal dUTPase subfamily.

It carries out the reaction dUTP + H2O = dUMP + diphosphate + H(+). It functions in the pathway pyrimidine metabolism; dUMP biosynthesis; dUMP from dCTP (dUTP route): step 2/2. This enzyme is involved in nucleotide metabolism: it produces dUMP, the immediate precursor of thymidine nucleotides and it decreases the intracellular concentration of dUTP so that uracil cannot be incorporated into DNA. The polypeptide is Probable deoxyuridine 5'-triphosphate nucleotidohydrolase (Methanococcoides burtonii (strain DSM 6242 / NBRC 107633 / OCM 468 / ACE-M)).